The following is a 264-amino-acid chain: Thiazole synthase (264 aa).

The active-site Schiff-base intermediate with DXP is the lysine 106. 1-deoxy-D-xylulose 5-phosphate contacts are provided by residues glycine 167, 193–194 (AG), and 215–216 (NS).

The protein belongs to the ThiG family. In terms of assembly, homotetramer. Forms heterodimers with either ThiH or ThiS.

It localises to the cytoplasm. It carries out the reaction [ThiS sulfur-carrier protein]-C-terminal-Gly-aminoethanethioate + 2-iminoacetate + 1-deoxy-D-xylulose 5-phosphate = [ThiS sulfur-carrier protein]-C-terminal Gly-Gly + 2-[(2R,5Z)-2-carboxy-4-methylthiazol-5(2H)-ylidene]ethyl phosphate + 2 H2O + H(+). Its pathway is cofactor biosynthesis; thiamine diphosphate biosynthesis. Its function is as follows. Catalyzes the rearrangement of 1-deoxy-D-xylulose 5-phosphate (DXP) to produce the thiazole phosphate moiety of thiamine. Sulfur is provided by the thiocarboxylate moiety of the carrier protein ThiS. In vitro, sulfur can be provided by H(2)S. This chain is Thiazole synthase, found in Pseudomonas fluorescens (strain Pf0-1).